A 287-amino-acid chain; its full sequence is Uroporphyrinogen-III C-methyltransferase (287 aa).

A compositionally biased stretch (polar residues) spans Met1 to Ala10. Positions Met1–Val24 are disordered. Residues Pro40, Gly116–Asp118, Thr146, and Met199 contribute to the S-adenosyl-L-methionine site.

Belongs to the precorrin methyltransferase family.

The enzyme catalyses uroporphyrinogen III + 2 S-adenosyl-L-methionine = precorrin-2 + 2 S-adenosyl-L-homocysteine + H(+). It participates in porphyrin-containing compound metabolism; siroheme biosynthesis; precorrin-2 from uroporphyrinogen III: step 1/1. In terms of biological role, catalyzes the methylation of both C-2 and C-7 of uroporphyrinogen III leading to precorrin-1 and precorrin-2; their oxidative esterification gives respectively factor I octamethyl ester and sirohydrochlorin. Inactivation of uroporphyrinogen-III methyltransferase results in the loss of nitrite and nitric oxide reductase activities, but not of nitrous oxide reductase activity. Likely involved in heme D1 biosynthesis. This is Uroporphyrinogen-III C-methyltransferase (nirE) from Paracoccus denitrificans (strain Pd 1222).